We begin with the raw amino-acid sequence, 314 residues long: MMGSAQTLATRHAPNPRGLVMGMGLKTLQKRLSHLTGNAIRDYRMIEEGDRVMVCLSGGKDSYALLDVLLRLQKRAPVRFELVAVNLDQKQPGFPEHVLPEYLASLGVPYRILEADTYSTVERVIPEGKTKCSLCSRLRRGLLYGAAEEMGCSKIALGHHRDDILETFFLNLFYGGRLAAMPPKLRSNNGRHVVIRPLAYVPEPYLERYAERMAFPIIPCTLCGSQPDLKRQMIKAMLREWGEIEPRRLANIFSALQNVQPSHLADKELYDFINLVGSVQPGEDPVSALETPHGDGFPAAEVLSGVQRHDPQSA.

The PP-loop motif signature appears at serine 57–serine 62. Positions 132, 135, and 223 each coordinate [4Fe-4S] cluster.

The protein belongs to the TtcA family. In terms of assembly, homodimer. Mg(2+) is required as a cofactor. The cofactor is [4Fe-4S] cluster.

Its subcellular location is the cytoplasm. It catalyses the reaction cytidine(32) in tRNA + S-sulfanyl-L-cysteinyl-[cysteine desulfurase] + AH2 + ATP = 2-thiocytidine(32) in tRNA + L-cysteinyl-[cysteine desulfurase] + A + AMP + diphosphate + H(+). The protein operates within tRNA modification. Its function is as follows. Catalyzes the ATP-dependent 2-thiolation of cytidine in position 32 of tRNA, to form 2-thiocytidine (s(2)C32). The sulfur atoms are provided by the cysteine/cysteine desulfurase (IscS) system. This chain is tRNA-cytidine(32) 2-sulfurtransferase, found in Alkalilimnicola ehrlichii (strain ATCC BAA-1101 / DSM 17681 / MLHE-1).